The following is a 390-amino-acid chain: Transaldolase (390 aa).

K135 acts as the Schiff-base intermediate with substrate in catalysis. 2 EF-hand domains span residues 329–364 (AFCHVVQEIFMLNDLDGDGCITREEWLGSDAVFDAL) and 365–388 (DHDHDGRLLQEDVRSGLGAALALT). Residues D342, D344, D346, C348, E353, D365, D367, D369, R371, and D376 each contribute to the Ca(2+) site.

The protein belongs to the transaldolase family. Type 1 subfamily.

It is found in the cytoplasm. The catalysed reaction is D-sedoheptulose 7-phosphate + D-glyceraldehyde 3-phosphate = D-erythrose 4-phosphate + beta-D-fructose 6-phosphate. The protein operates within carbohydrate degradation; pentose phosphate pathway; D-glyceraldehyde 3-phosphate and beta-D-fructose 6-phosphate from D-ribose 5-phosphate and D-xylulose 5-phosphate (non-oxidative stage): step 2/3. Its function is as follows. Transaldolase is important for the balance of metabolites in the pentose-phosphate pathway. In Prochlorococcus marinus (strain MIT 9313), this protein is Transaldolase.